Here is an 83-residue protein sequence, read N- to C-terminus: Three-finger toxin W-IV (83 aa).

A signal peptide spans 1–21; sequence MKTLLLTLVVVTIVCLDLGHT. 4 disulfides stabilise this stretch: Cys-24–Cys-45, Cys-38–Cys-62, Cys-64–Cys-75, and Cys-76–Cys-81.

Belongs to the three-finger toxin family. Short-chain subfamily. Type I alpha-neurotoxin sub-subfamily. As to expression, expressed by the venom gland.

Its subcellular location is the secreted. In terms of biological role, binds to muscle nicotinic acetylcholine receptor (nAChR) and inhibit acetylcholine from binding to the receptor, thereby impairing neuromuscular transmission. In Walterinnesia aegyptia (Desert black snake), this protein is Three-finger toxin W-IV.